Reading from the N-terminus, the 700-residue chain is Acetoacetyl-CoA synthetase (700 aa).

Positions 1-35 (MTAVSANGKTTEKHENGAHTNGTTNGTTNGSMNGN) are disordered. The segment covering 18-35 (AHTNGTTNGTTNGSMNGN) has biased composition (low complexity).

The protein belongs to the ATP-dependent AMP-binding enzyme family. Present in most cells of the organism.

The protein resides in the cytoplasm. The protein localises to the nucleus. The catalysed reaction is acetoacetate + ATP + CoA = acetoacetyl-CoA + AMP + diphosphate. In terms of biological role, activates acetoacetate to acetoacetyl-CoA. Negatively regulates let-60 Ras activity during vulval induction. This Caenorhabditis elegans protein is Acetoacetyl-CoA synthetase (sur-5).